Consider the following 435-residue polypeptide: Hyaluronidase-1 (435 aa).

The N-terminal stretch at 1–21 (MAAHLLPICALFLTLLDMAQG) is a signal peptide. Disulfide bonds link cysteine 43–cysteine 333 and cysteine 207–cysteine 221. Asparagine 99 carries an N-linked (GlcNAc...) asparagine glycan. The Proton donor role is filled by glutamate 131. N-linked (GlcNAc...) asparagine glycans are attached at residues asparagine 216 and asparagine 350. Residues 354–430 (GALLCSQALC…YPGWQAPWCE (77 aa)) form the EGF-like domain. 3 disulfides stabilise this stretch: cysteine 358-cysteine 369, cysteine 363-cysteine 418, and cysteine 420-cysteine 429.

It belongs to the glycosyl hydrolase 56 family. Highly expressed in the liver, kidney and heart. Weakly expressed in lung, placenta and skeletal muscle. No expression detected in adult brain. Isoform 1 is expressed only in bladder and prostate cancer cells, G2/G3 bladder tumor tissues and lymph node specimens showing tumor invasive tumors cells. Isoform 3, isoform 4, isoform 5 and isoform 6 are expressed in normal bladder and bladder tumor tissues.

It is found in the secreted. The protein localises to the lysosome. The enzyme catalyses Random hydrolysis of (1-&gt;4)-linkages between N-acetyl-beta-D-glucosamine and D-glucuronate residues in hyaluronate.. May have a role in promoting tumor progression. May block the TGFB1-enhanced cell growth. This is Hyaluronidase-1 (HYAL1) from Homo sapiens (Human).